A 503-amino-acid polypeptide reads, in one-letter code: Probable cytosol aminopeptidase (503 aa).

K270 and D275 together coordinate Mn(2+). K282 is an active-site residue. Mn(2+) is bound by residues D293, D352, and E354. The active site involves R356.

The protein belongs to the peptidase M17 family. The cofactor is Mn(2+).

The protein localises to the cytoplasm. The enzyme catalyses Release of an N-terminal amino acid, Xaa-|-Yaa-, in which Xaa is preferably Leu, but may be other amino acids including Pro although not Arg or Lys, and Yaa may be Pro. Amino acid amides and methyl esters are also readily hydrolyzed, but rates on arylamides are exceedingly low.. It carries out the reaction Release of an N-terminal amino acid, preferentially leucine, but not glutamic or aspartic acids.. Its function is as follows. Presumably involved in the processing and regular turnover of intracellular proteins. Catalyzes the removal of unsubstituted N-terminal amino acids from various peptides. This chain is Probable cytosol aminopeptidase, found in Salmonella typhi.